The following is a 461-amino-acid chain: Sensor histidine kinase MctS (461 aa).

The next 2 helical transmembrane spans lie at 7 to 27 (IIALAIVPLVISILAITTFIT) and 203 to 223 (FVIVALIDVPSVLVVFTTCML). His259 carries the phosphohistidine; by autocatalysis modification. The Histidine kinase domain maps to 360–450 (LYRVAQEAFN…TLTAMMPKSA (91 aa)).

Its subcellular location is the cell membrane. It catalyses the reaction ATP + protein L-histidine = ADP + protein N-phospho-L-histidine.. Its function is as follows. Member of the two-component regulatory system MctS/MctR, which activates mctP expression. The polypeptide is Sensor histidine kinase MctS (Rhizobium johnstonii (strain DSM 114642 / LMG 32736 / 3841) (Rhizobium leguminosarum bv. viciae)).